The following is a 682-amino-acid chain: ATP-dependent zinc metalloprotease FtsH (682 aa).

At 1–7 (MKQSHKT) the chain is on the cytoplasmic side. The chain crosses the membrane as a helical span at residues 8-28 (ILLWALLIFLFVMIYNLISDG). The Periplasmic segment spans residues 29–138 (TSGEETLDTT…YEVKAKEEST (110 aa)). Residues 139–159 (FWQSLLISWLPMLLLFALFFF) traverse the membrane as a helical segment. The Cytoplasmic portion of the chain corresponds to 160–682 (FMRQLQAGGG…SGTDPEPEPA (523 aa)). 232–239 (GPPGTGKT) provides a ligand contact to ATP. Residue histidine 454 coordinates Zn(2+). Glutamate 455 is a catalytic residue. The Zn(2+) site is built by histidine 458 and aspartate 531. Residues 638 to 682 (LSRPAVVSKPSADAESSVDEDEREARPALFPPLGKSGTDPEPEPA) are disordered.

In the central section; belongs to the AAA ATPase family. This sequence in the C-terminal section; belongs to the peptidase M41 family. As to quaternary structure, homohexamer. Zn(2+) serves as cofactor.

The protein localises to the cell inner membrane. In terms of biological role, acts as a processive, ATP-dependent zinc metallopeptidase for both cytoplasmic and membrane proteins. Plays a role in the quality control of integral membrane proteins. In Haliangium ochraceum (strain DSM 14365 / JCM 11303 / SMP-2), this protein is ATP-dependent zinc metalloprotease FtsH.